Consider the following 172-residue polypeptide: MSAQVSLELHHRISQFLFHEASLLDDWKFRDWLAQLDEEIRYTMRTTVNAQTRDRRKGVQPPTTWIFNDTKDQLERRIARLETGMAWAEEPPSRTRHLISNCQVSETDIPNVFAVRVNYLLYRAQKERDETFYVGTRFDKVRRLEDDNWRLLERDIVLDQAVITSHNLSVLF.

This sequence belongs to the bacterial ring-hydroxylating dioxygenase beta subunit family. As to quaternary structure, this dioxygenase system consists of four proteins: the two subunits of the hydroxylase component (HcaE and HcaF), a ferredoxin (HcaC) and a ferredoxin reductase (HcaD).

The catalysed reaction is 3-phenylpropanoate + NADH + O2 + H(+) = 3-(cis-5,6-dihydroxycyclohexa-1,3-dien-1-yl)propanoate + NAD(+). The enzyme catalyses (E)-cinnamate + NADH + O2 + H(+) = (2E)-3-(cis-5,6-dihydroxycyclohexa-1,3-dien-1-yl)prop-2-enoate + NAD(+). It functions in the pathway aromatic compound metabolism; 3-phenylpropanoate degradation. Its function is as follows. Part of the multicomponent 3-phenylpropionate dioxygenase. Converts 3-phenylpropionic acid (PP) and cinnamic acid (CI) into 3-phenylpropionate-dihydrodiol (PP-dihydrodiol) and cinnamic acid-dihydrodiol (CI-dihydrodiol), respectively. The protein is 3-phenylpropionate/cinnamic acid dioxygenase subunit beta of Escherichia coli O7:K1 (strain IAI39 / ExPEC).